Consider the following 233-residue polypeptide: Small ribosomal subunit protein uS3 (233 aa).

The region spanning 39–108 (IRTALFKLLK…KLIVNVRVIE (70 aa)) is the KH type-2 domain.

Belongs to the universal ribosomal protein uS3 family. Part of the 30S ribosomal subunit. Forms a tight complex with proteins S10 and S14.

Binds the lower part of the 30S subunit head. Binds mRNA in the 70S ribosome, positioning it for translation. The protein is Small ribosomal subunit protein uS3 of Mycoplasma mycoides subsp. mycoides SC (strain CCUG 32753 / NCTC 10114 / PG1).